Consider the following 170-residue polypeptide: Thioredoxin-like protein YneN (170 aa).

A helical transmembrane segment spans residues 5–23; that stretch reads WLAGILLIMLVGYTGWNLY. The Thioredoxin domain maps to 33-170; sequence IQEGQQAPDF…KEMEQKLDLD (138 aa). A disulfide bond links C71 and C74.

Belongs to the thioredoxin family.

It is found in the cell membrane. The chain is Thioredoxin-like protein YneN (yneN) from Bacillus subtilis (strain 168).